We begin with the raw amino-acid sequence, 385 residues long: A-type ATP synthase subunit C (385 aa).

The protein belongs to the V-ATPase V0D/AC39 subunit family. Has multiple subunits with at least A(3), B(3), C, D, E, F, H, I and proteolipid K(x).

It is found in the cell membrane. In terms of biological role, component of the A-type ATP synthase that produces ATP from ADP in the presence of a proton gradient across the membrane. The sequence is that of A-type ATP synthase subunit C from Methanothermobacter thermautotrophicus (strain ATCC 29096 / DSM 1053 / JCM 10044 / NBRC 100330 / Delta H) (Methanobacterium thermoautotrophicum).